We begin with the raw amino-acid sequence, 275 residues long: NH(3)-dependent NAD(+) synthetase (275 aa).

47 to 54 (GISGGQDS) lines the ATP pocket. Asp-53 contributes to the Mg(2+) binding site. Arg-141 lines the deamido-NAD(+) pocket. Thr-161 contacts ATP. A Mg(2+)-binding site is contributed by Glu-166. Residues Lys-174 and Asp-181 each coordinate deamido-NAD(+). Positions 190 and 212 each coordinate ATP. 261 to 262 (HK) serves as a coordination point for deamido-NAD(+).

The protein belongs to the NAD synthetase family. As to quaternary structure, homodimer.

The catalysed reaction is deamido-NAD(+) + NH4(+) + ATP = AMP + diphosphate + NAD(+) + H(+). The protein operates within cofactor biosynthesis; NAD(+) biosynthesis; NAD(+) from deamido-NAD(+) (ammonia route): step 1/1. Its function is as follows. Catalyzes the ATP-dependent amidation of deamido-NAD to form NAD. Uses ammonia as a nitrogen source. The chain is NH(3)-dependent NAD(+) synthetase from Enterococcus faecalis (strain ATCC 700802 / V583).